The following is a 217-amino-acid chain: Large ribosomal subunit protein bL21m (217 aa).

The span at 61–81 (PPKVTTATTPEAPAAVPTSTP) shows a compositional bias: low complexity. Residues 61-87 (PPKVTTATTPEAPAAVPTSTPFSQQPP) are disordered.

The protein belongs to the bacterial ribosomal protein bL21 family. Component of the mitochondrial large ribosomal subunit (mt-LSU). Mature N.crassa 74S mitochondrial ribosomes consist of a small (37S) and a large (54S) subunit. The 37S small subunit contains a 16S ribosomal RNA (16S mt-rRNA) and 32 different proteins. The 54S large subunit contains a 23S rRNA (23S mt-rRNA) and 42 different proteins.

The protein localises to the mitochondrion. Functionally, component of the mitochondrial ribosome (mitoribosome), a dedicated translation machinery responsible for the synthesis of mitochondrial genome-encoded proteins, including at least some of the essential transmembrane subunits of the mitochondrial respiratory chain. The mitoribosomes are attached to the mitochondrial inner membrane and translation products are cotranslationally integrated into the membrane. This Neurospora crassa (strain ATCC 24698 / 74-OR23-1A / CBS 708.71 / DSM 1257 / FGSC 987) protein is Large ribosomal subunit protein bL21m (mrpl49).